The following is a 440-amino-acid chain: Enolase (440 aa).

The interval 120-189 (KAAAAEKRVP…TEAMRQGAEV (70 aa)) is igE-binding determinant. Residues H159 and E168 each contribute to the substrate site. E211 functions as the Proton donor in the catalytic mechanism. Residues D246, E297, and D324 each contribute to the Mg(2+) site. Substrate-binding residues include E297 and D324. K349 functions as the Proton acceptor in the catalytic mechanism. Residues 376–379 (SHRS) and K400 contribute to the substrate site.

The protein belongs to the enolase family. In terms of assembly, homodimer. Requires Mg(2+) as cofactor.

Its subcellular location is the cytoplasm. It carries out the reaction (2R)-2-phosphoglycerate = phosphoenolpyruvate + H2O. It participates in carbohydrate degradation; glycolysis; pyruvate from D-glyceraldehyde 3-phosphate: step 4/5. The protein is Enolase (ENO) of Davidiella tassiana (Mycosphaerella tassiana).